Reading from the N-terminus, the 205-residue chain is CASP-like protein 0U1 (205 aa).

Residues 1 to 66 lie on the Cytoplasmic side of the membrane; the sequence is MSGGDIDPTA…GYHKFAVFQF (66 aa). One can recognise an MARVEL domain in the interval 10–162; the sequence is AINSPKFRLI…SMMFTWKEWR (153 aa). A helical transmembrane segment spans residues 67 to 87; it reads LVVICVTYWLFTMLWMGMYLI. The Extracellular portion of the chain corresponds to 88-90; the sequence is QKV. The helical transmembrane segment at 91-111 threads the bilayer; that stretch reads PPAGTEFMIYAVFNVLILIAF. Over 112–137 the chain is Cytoplasmic; sequence STSWTECNETIVDPTYPVCKRATGAK. The chain crosses the membrane as a helical span at residues 138–158; it reads ASIAFAMFTWLALCVSMMFTW. Topologically, residues 159–167 are extracellular; it reads KEWRDQNYE. The helical transmembrane segment at 168 to 188 threads the bilayer; sequence GLPIFGDFSSFMPGGGGGGMG. At 189 to 205 the chain is on the cytoplasmic side; the sequence is GGGGYERPSDVNTQTYA.

Belongs to the Casparian strip membrane proteins (CASP) family. In terms of assembly, homodimer and heterodimers.

Its subcellular location is the cell membrane. The sequence is that of CASP-like protein 0U1 from Micromonas pusilla (strain CCMP1545) (Picoplanktonic green alga).